A 624-amino-acid chain; its full sequence is Kelch-like ECH-associated protein 1 (624 aa).

S-(2-succinyl)cysteine is present on Cys-38. A BTB domain is found at Cys-77–Glu-149. An N5-[4-(S-L-cysteinyl)-5-methyl-1H-imidazol-2-yl]-L-ornithine (Arg-Cys) (interchain with C-151 in KEAP1) cross-link involves residue Arg-135. S-(2,3-dicarboxypropyl)cysteine; alternate is present on Cys-151. Position 151 is an S-(2-succinyl)cysteine; alternate (Cys-151). The residue at position 151 (Cys-151) is an S-nitrosocysteine; alternate. Cys-151 is covalently cross-linked (N5-[4-(S-L-cysteinyl)-5-methyl-1H-imidazol-2-yl]-L-ornithine (Cys-Arg) (interchain with R-135 in KEAP1)). Positions Ala-184 to Gln-286 constitute a BACK domain. S-(2-succinyl)cysteine is present on Cys-241. An S-(2,3-dicarboxypropyl)cysteine mark is found at Cys-257 and Cys-273. S-(2,3-dicarboxypropyl)cysteine; alternate is present on Cys-288. Cys-288 bears the S-(2-succinyl)cysteine; alternate mark. Position 319 is an S-(2-succinyl)cysteine (Cys-319). Kelch repeat units lie at residues Leu-327–Gly-372, Leu-373–Gly-423, His-424–Arg-470, Leu-471–Asn-517, Ile-519–Gly-564, and Lys-565–Glu-611. Cys-434 is modified (S-cGMP-cysteine). Cys-613 is modified (S-(2-succinyl)cysteine).

Belongs to the KEAP1 family. In terms of assembly, component of the BCR(KEAP1) E3 ubiquitin ligase complex, at least composed of 2 molecules of CUL3, 2 molecules of KEAP1, and RBX1. Interacts with NFE2L2/NRF2; the interaction is direct. Forms a ternary complex with NFE2L2/NRF2 and PGAM5. Interacts with (phosphorylated) SQSTM1/p62; the interaction is direct and inactivates the BCR(KEAP1) complex by sequestering it in inclusion bodies, promoting its degradation. Interacts with NFE2L1. Interacts with BPTF and PTMA. Interacts with MAP1LC3B. Interacts indirectly with ENC1. Interacts with SESN1 and SESN2. Interacts with HSP90AA1 and HSP90AB1. Interacts with PGCKA1; this interaction prevents the ubiquitination of KEAP1 by TRIM25, thus protecting KEAP1 from degradation. Post-translationally, non-enzymatic covalent modifications of reactive cysteines by electrophile metabolites inactivate the BCR(KEAP1) complex. Accumulation of fumarate promotes the formation of cysteine S-succination (S-(2-succinyl)cysteine), leading to inactivate the BCR(KEAP1) complex and promote NFE2L2/NRF2 nuclear accumulation and activation. Nitric oxide-dependent 8-Nitro-cGMP formation promotes cysteine guanylation (S-cGMP-cysteine), leading to NFE2L2/NRF2 nuclear accumulation and activation. Itaconate, an anti-inflammatory metabolite generated in response to lipopolysaccharide, alkylates cysteines, activating NFE2L2/NRF2. Methylglyoxal, a reactive metabolite that accumulates when the glycolytic enzyme PGK1 is inhibited, promotes formation of a methylimidazole cross-link between proximal Cys-151 and Arg-135 on another KEAP1 molecule, resulting in an inactive dimer that inactivates the BCR(KEAP1) complex. In terms of processing, degraded via a proteasomal-independent process during selective autophagy: interaction with phosphorylated SQSTM1/p62 sequesters KEAP1 in inclusion bodies, leading to its degradation. Auto-ubiquitinated by the BCR(KEAP1) complex. Quinone-induced oxidative stress, but not sulforaphane, increases its ubiquitination. Ubiquitination and subsequent degradation is most pronounced following prolonged exposure of cells to oxidative stress, particularly in glutathione-deficient cells that are highly susceptible to oxidative stress. Deubiquitinated by USP25; leading to stabilization. Ubiquitinated by TRIM25; leading to degradation upon ER stress.

It localises to the cytoplasm. The protein resides in the nucleus. It participates in protein modification; protein ubiquitination. With respect to regulation, ubiquitin ligase activity of the BCR(KEAP1) complex is inhibited by oxidative stress and electrophile metabolites such as sulforaphane. Electrophile metabolites react with reactive cysteine residues in KEAP1 and trigger non-enzymatic covalent modifications of these cysteine residues, leading to inactivate the ubiquitin ligase activity of the BCR(KEAP1) complex. Selective autophagy also inactivates the BCR(KEAP1) complex via interaction between KEAP1 and SQSTM1/p62, which sequesters the complex in inclusion bodies and promotes its degradation. Its function is as follows. Substrate-specific adapter of a BCR (BTB-CUL3-RBX1) E3 ubiquitin ligase complex that regulates the response to oxidative stress by targeting NFE2L2/NRF2 for ubiquitination. KEAP1 acts as a key sensor of oxidative and electrophilic stress: in normal conditions, the BCR(KEAP1) complex mediates ubiquitination and degradation of NFE2L2/NRF2, a transcription factor regulating expression of many cytoprotective genes. In response to oxidative stress, different electrophile metabolites trigger non-enzymatic covalent modifications of highly reactive cysteine residues in KEAP1, leading to inactivate the ubiquitin ligase activity of the BCR(KEAP1) complex, promoting NFE2L2/NRF2 nuclear accumulation and expression of phase II detoxifying enzymes. In response to selective autophagy, KEAP1 is sequestered in inclusion bodies following its interaction with SQSTM1/p62, leading to inactivation of the BCR(KEAP1) complex and activation of NFE2L2/NRF2. The BCR(KEAP1) complex also mediates ubiquitination of SQSTM1/p62, increasing SQSTM1/p62 sequestering activity and degradation. The BCR(KEAP1) complex also targets BPTF and PGAM5 for ubiquitination and degradation by the proteasome. In Mus musculus (Mouse), this protein is Kelch-like ECH-associated protein 1.